The chain runs to 166 residues: Small ribosomal subunit protein uS5 (166 aa).

In terms of domain architecture, S5 DRBM spans 11 to 74 (LIEKLVSVKR…ENAKKNMVSV (64 aa)).

Belongs to the universal ribosomal protein uS5 family. Part of the 30S ribosomal subunit. Contacts proteins S4 and S8.

With S4 and S12 plays an important role in translational accuracy. Functionally, located at the back of the 30S subunit body where it stabilizes the conformation of the head with respect to the body. The chain is Small ribosomal subunit protein uS5 from Francisella tularensis subsp. holarctica (strain LVS).